The primary structure comprises 289 residues: Acetyl-coenzyme A carboxylase carboxyl transferase subunit beta (289 aa).

Residues 28 to 289 (VMTKCPECKK…QGGEMAVWQS (262 aa)) form the CoA carboxyltransferase N-terminal domain. Residues C32, C35, C51, and C54 each contribute to the Zn(2+) site. The C4-type zinc-finger motif lies at 32 to 54 (CPECKKIMYTKELLKNLKVCVNC).

It belongs to the AccD/PCCB family. As to quaternary structure, acetyl-CoA carboxylase is a heterohexamer composed of biotin carboxyl carrier protein (AccB), biotin carboxylase (AccC) and two subunits each of ACCase subunit alpha (AccA) and ACCase subunit beta (AccD). It depends on Zn(2+) as a cofactor.

It is found in the cytoplasm. It catalyses the reaction N(6)-carboxybiotinyl-L-lysyl-[protein] + acetyl-CoA = N(6)-biotinyl-L-lysyl-[protein] + malonyl-CoA. It functions in the pathway lipid metabolism; malonyl-CoA biosynthesis; malonyl-CoA from acetyl-CoA: step 1/1. Its function is as follows. Component of the acetyl coenzyme A carboxylase (ACC) complex. Biotin carboxylase (BC) catalyzes the carboxylation of biotin on its carrier protein (BCCP) and then the CO(2) group is transferred by the transcarboxylase to acetyl-CoA to form malonyl-CoA. The chain is Acetyl-coenzyme A carboxylase carboxyl transferase subunit beta from Bacillus cereus (strain ATCC 14579 / DSM 31 / CCUG 7414 / JCM 2152 / NBRC 15305 / NCIMB 9373 / NCTC 2599 / NRRL B-3711).